A 508-amino-acid chain; its full sequence is Cytochrome P450 4A12B (508 aa).

The signal sequence occupies residues 1-37 (MSASALSSIRFPGSISEYLQVASVLSLLLLLFKTAQL). The heme site is built by Glu319 and Cys455.

Belongs to the cytochrome P450 family. It depends on heme as a cofactor. Expressed in lung, but almost undetectable in the kidneys of five different strains.

It localises to the endoplasmic reticulum membrane. Its subcellular location is the microsome membrane. The enzyme catalyses an organic molecule + reduced [NADPH--hemoprotein reductase] + O2 = an alcohol + oxidized [NADPH--hemoprotein reductase] + H2O + H(+). It carries out the reaction dodecanoate + reduced [NADPH--hemoprotein reductase] + O2 = 11-hydroxydodecanoate + oxidized [NADPH--hemoprotein reductase] + H2O + H(+). The catalysed reaction is dodecanoate + reduced [NADPH--hemoprotein reductase] + O2 = 12-hydroxydodecanoate + oxidized [NADPH--hemoprotein reductase] + H2O + H(+). It catalyses the reaction (5Z,8Z,11Z,14Z)-eicosatetraenoate + reduced [NADPH--hemoprotein reductase] + O2 = 18-hydroxy-(5Z,8Z,11Z,14Z)-eicosatetraenoate + oxidized [NADPH--hemoprotein reductase] + H2O + H(+). The enzyme catalyses (5Z,8Z,11Z,14Z)-eicosatetraenoate + reduced [NADPH--hemoprotein reductase] + O2 = 19-hydroxy-(5Z,8Z,11Z,14Z)-eicosatetraenoate + oxidized [NADPH--hemoprotein reductase] + H2O + H(+). It carries out the reaction (5Z,8Z,11Z,14Z)-eicosatetraenoate + reduced [NADPH--hemoprotein reductase] + O2 = 20-hydroxy-(5Z,8Z,11Z,14Z)-eicosatetraenoate + oxidized [NADPH--hemoprotein reductase] + H2O + H(+). The catalysed reaction is (5Z,8Z,11Z,14Z,17Z)-eicosapentaenoate + reduced [NADPH--hemoprotein reductase] + O2 = 19-hydroxy-(5Z,8Z,11Z,14Z,17Z)-eicosapentaenoate + oxidized [NADPH--hemoprotein reductase] + H2O + H(+). It catalyses the reaction (5Z,8Z,11Z,14Z,17Z)-eicosapentaenoate + reduced [NADPH--hemoprotein reductase] + O2 = 20-hydroxy-(5Z,8Z,11Z,14Z,17Z)-eicosapentaenoate + oxidized [NADPH--hemoprotein reductase] + H2O + H(+). The enzyme catalyses (5Z,8Z,11Z,14Z,17Z)-eicosapentaenoate + reduced [NADPH--hemoprotein reductase] + O2 = (17S,18R)-epoxy-(5Z,8Z,11Z,14Z)-eicosatetraenoate + oxidized [NADPH--hemoprotein reductase] + H2O + H(+). It carries out the reaction (5Z,8Z,11Z,14Z,17Z)-eicosapentaenoate + reduced [NADPH--hemoprotein reductase] + O2 = (17R,18S)-epoxy-(5Z,8Z,11Z,14Z)-eicosatetraenoate + oxidized [NADPH--hemoprotein reductase] + H2O + H(+). The protein operates within lipid metabolism; fatty acid metabolism. Its activity is regulated as follows. Activated by cytochrome b5. The Vmax almost doubles in the presence of cytochrome b5. Its function is as follows. A cytochrome P450 monooxygenase involved in the metabolism of fatty acids and their oxygenated derivatives (oxylipins). Mechanistically, uses molecular oxygen inserting one oxygen atom into a substrate, and reducing the second into a water molecule, with two electrons provided by NADPH via cytochrome P450 reductase (CPR; NADPH-ferrihemoprotein reductase). Catalyzes predominantly the oxidation of the terminal carbon (omega-oxidation) of saturated and unsaturated fatty acids. May act as a major omega-hydroxylase for dodecanoic (lauric) acid in kidney. Participates in omega-hydroxylation of (5Z,8Z,11Z,14Z)-eicosatetraenoic acid (arachidonate) to 20-hydroxyeicosatetraenoic acid (20-HETE), a signaling molecule acting both as vasoconstrictive and natriuretic with overall effect on arterial blood pressure. Acts as an omega-hydroxylase and epoxidase toward (5Z,8Z,11Z,14Z,17Z)-eicosapentaenoc acid (EPA). Catalyzes the epoxidation of the last double bond of EPA with no preferred stereoselectivity, producing both (R,S) and (S,R) stereoisomers. Can also catalyze the omega-1 and omega-2 oxidation of fatty acids with lower efficiency. This is Cytochrome P450 4A12B from Mus musculus (Mouse).